A 471-amino-acid chain; its full sequence is MAVPSVKGKEYESVSEIRGQLLVVEGVSDAGYGELVDIEMPSGEKRRGIVLETGKGLAVVQVFEGTTGISPAGTKVRFTGRILEMGVSEDMLGRIMNALGEPIDGGAPIKAVEKRNVWGEPINPYAREYPDEFIETGISAIDGMNSLVRGQKLPIFSGSGLPHNKLAAQIARQATVRGEEESFAVVFAAVGIQYDELLFFKKAFEETGAISRTAMFVSLANEPAMMKIVTPRAALTLAEYLAFQKDMHVLVIITDMTNYCEALREISASREEVPSRQGYPGYMYTDLATIYERAGRVKGSKGSITQMPILTMPNDDITHPIPDLTGYITEGQIVLSRDLHNKGIYPPINVLMSLSRLMRDGIGKGKTREDHPDVANQLFAAYSRAVELRGLAAIVGEESLSEVDRKYLRFGEAFEQKFLKQDYYERRTIEQTLDLAWEVLSILPEEELTKIRPEYIKKYHPKYRVKAASQK.

This sequence belongs to the ATPase alpha/beta chains family. In terms of assembly, has multiple subunits with at least A(3), B(3), C, D, E, F, H, I and proteolipid K(x).

The protein localises to the cell membrane. In terms of biological role, component of the A-type ATP synthase that produces ATP from ADP in the presence of a proton gradient across the membrane. The B chain is a regulatory subunit. The polypeptide is A-type ATP synthase subunit B (Ignicoccus hospitalis (strain KIN4/I / DSM 18386 / JCM 14125)).